Reading from the N-terminus, the 682-residue chain is MIDQYKHQQLQIGLVSPQQIKAWANKTLPNGEVVGEVTRPSTFHYKTDKPEKDGLFCERIFGPIKSRICACGNSRASGAENEDERFCQKCGVEFVDSRIRRYQMGYIKLACPVTHVWYLKGLPSYIANLLDKPLKKLEGLVYGDFSFARPSAKKPTFLRLRGLFEDEISSCNHSISPFFSTPGFTTFRNREIATGAGAIREQLADLDLRIILENSSVEWKELEDEGYSGDEWEDRKRRIRKVFLIRRMQLAKHFIQTNVEPEWMVLCLLPVLPPELRPIVYRSGDKVVTSDINELYKRVIRRNNNLAYLLKRSELAPADLVMCQEKLVQEAVDTLLDSGSRGQPTRDGHNKVYKSLSDVIEGKEGRFRETLLGKRVDYSGRSVIVVGPSLSLHQCGLPLEIAIKLFQLFVIRDLITKRATSNVRIAKRKIWEKEPIVWEILQEVMRGHPVLLNRAPTLHRLGIQAFQPTLVEGRTICLHPLVCKGFNADFDGDQMAVHLPLSLEAQAEARLLMFSHMNLLSPAIGDPICVPTQDMLIGLYVLTIGNRRGICANRYNSCGNYPNQKVNYNNNNPKYTKDKESLFSSSYDALGAYRQKQICLDSPLWLRWKLDQRVIGLREVPIEVQYESLGTYREIYAHYLVVGNRKKEIRSIYIRTTLGHISFYREIEEAIQGFSQAYSYTI.

Cys69, Cys71, Cys87, and Cys90 together coordinate Zn(2+). Asp489, Asp491, and Asp493 together coordinate Mg(2+).

This sequence belongs to the RNA polymerase beta' chain family. RpoC1 subfamily. In terms of assembly, in plastids the minimal PEP RNA polymerase catalytic core is composed of four subunits: alpha, beta, beta', and beta''. When a (nuclear-encoded) sigma factor is associated with the core the holoenzyme is formed, which can initiate transcription. Mg(2+) serves as cofactor. Requires Zn(2+) as cofactor.

Its subcellular location is the plastid. The protein localises to the chloroplast. It catalyses the reaction RNA(n) + a ribonucleoside 5'-triphosphate = RNA(n+1) + diphosphate. In terms of biological role, DNA-dependent RNA polymerase catalyzes the transcription of DNA into RNA using the four ribonucleoside triphosphates as substrates. This chain is DNA-directed RNA polymerase subunit beta', found in Oryza nivara (Indian wild rice).